A 519-amino-acid chain; its full sequence is Putative cytochrome P450 CYP13A1 (519 aa).

Heme is bound at residue Cys465.

Belongs to the cytochrome P450 family. Requires heme as cofactor.

In terms of biological role, cytochromes P450 are a group of heme-thiolate monooxygenases. They oxidize a variety of structurally unrelated compounds, including steroids, fatty acids, and xenobiotics. The polypeptide is Putative cytochrome P450 CYP13A1 (cyp-13A1) (Caenorhabditis elegans).